Here is a 550-residue protein sequence, read N- to C-terminus: Homeobox and leucine zipper protein Homez (550 aa).

The span at 1–10 (MVRGWEPPPG) shows a compositional bias: pro residues. A disordered region spans residues 1–36 (MVRGWEPPPGLDCAISEGHKSEGTMPPNKEASGLSS). The segment at residues 55–114 (WTQAAQTSELDSNEHLLKTFSYFPYPSLADIALLCLRYGLQMEKVKTWFMAQRLRCGISW) is a DNA-binding region (homeobox 1). A disordered region spans residues 168–199 (GPPTLSKPTQTKGLKVEPEEPSQMPPLPQSHQ). Glycyl lysine isopeptide (Lys-Gly) (interchain with G-Cter in SUMO2) cross-links involve residues Lys182, Lys200, and Lys202. The disordered stretch occupies residues 223–265 (LQSSGLSKEQAGRGPNQSHGIGTASWNHSTTVPQPQARDKPPP). Residues 237–256 (PNQSHGIGTASWNHSTTVPQ) show a composition bias toward polar residues. Ser351 carries the post-translational modification Phosphoserine. 2 DNA-binding regions (homeobox) span residues 355 to 415 (QRQR…KHGQ) and 451 to 510 (TPPL…AEVV). A Nuclear localization signal motif is present at residues 358 to 363 (RKTKRK). Disordered stretches follow at residues 424-465 (VPGA…DIQP) and 512-550 (CLDE…IIQD). Position 451 is a phosphothreonine (Thr451). The segment covering 452–463 (PPLPIPPPPPDI) has biased composition (pro residues). The segment covering 513–550 (LDEEEEEEEEELPEDDEEEEEEEEEDDDDDDDDVIIQD) has biased composition (acidic residues).

In terms of assembly, homodimer or heterodimer (Potential). Interacts with HOXC8. In terms of tissue distribution, ubiquitous. Strongly expressed in adult testis and kidney as well as fetal lung and kidney.

It is found in the nucleus. May function as a transcriptional regulator. The sequence is that of Homeobox and leucine zipper protein Homez (HOMEZ) from Homo sapiens (Human).